The chain runs to 914 residues: Neutral alpha-glucosidase C (914 aa).

Catalysis depends on D511, which acts as the Nucleophile. Residue E514 is part of the active site. D587 serves as the catalytic Proton donor.

This sequence belongs to the glycosyl hydrolase 31 family.

It catalyses the reaction Hydrolysis of terminal, non-reducing (1-&gt;4)-linked alpha-D-glucose residues with release of alpha-D-glucose.. Its function is as follows. Has alpha-glucosidase activity. This is Neutral alpha-glucosidase C (GANC) from Homo sapiens (Human).